The chain runs to 752 residues: Mitochondrial Rho GTPase 1 (752 aa).

The Cytoplasmic portion of the chain corresponds to 1 to 671 (MRKDVRIVLA…RNALSYGTNR (671 aa)). The 169-residue stretch at 2–170 (RKDVRIVLAG…FYFAQKAVLY (169 aa)) folds into the Miro 1 domain. GTP contacts are provided by residues 11–18 (GDPDVGKS), 57–61 (DTSSS), and 115–118 (NKID). 2 consecutive EF-hand domains span residues 186–221 (ACVD…CFDT) and 333–368 (NGYQ…APDN). Positions 199, 201, 203, 210, 346, 348, 350, and 357 each coordinate Ca(2+). A disordered region spans residues 426–460 (SSGSASTPAPIPLTPTGPPGSRPSRNRTPCPPSTI). Residues 434–446 (APIPLTPTGPPGS) are compositionally biased toward pro residues. One can recognise a Miro 2 domain in the interval 481-651 (RSVFLGFVLG…YGLICTIAVD (171 aa)). GTP contacts are provided by residues 490-497 (GAAGSGKT), 526-530 (EQAGA), and 595-598 (TKAD). A helical; Anchor for type IV membrane protein membrane pass occupies residues 672–692 (WQFWGYIGLVVIGGGGAVWIC). At 693 to 752 (AKVLKVPIGSTLGFGSSASTTSWWLSGAQARGAGGPNATKVSSWFDWIRWQSSSNVRSEL) the chain is on the mitochondrial intermembrane side.

It belongs to the mitochondrial Rho GTPase family.

Its subcellular location is the mitochondrion outer membrane. Its function is as follows. Mitochondrial GTPase involved in mitochondrial trafficking. Probably involved in control of anterograde transport of mitochondria and their subcellular distribution. The protein is Mitochondrial Rho GTPase 1 (GEM1) of Mycosarcoma maydis (Corn smut fungus).